Here is a 135-residue protein sequence, read N- to C-terminus: Putative pre-16S rRNA nuclease (135 aa).

Belongs to the YqgF nuclease family.

It is found in the cytoplasm. In terms of biological role, could be a nuclease involved in processing of the 5'-end of pre-16S rRNA. This is Putative pre-16S rRNA nuclease from Christiangramia forsetii (strain DSM 17595 / CGMCC 1.15422 / KT0803) (Gramella forsetii).